We begin with the raw amino-acid sequence, 289 residues long: Homoserine kinase (289 aa).

Residue 79–89 (PLARGLGSSSS) coordinates ATP.

It belongs to the GHMP kinase family. Homoserine kinase subfamily.

The protein resides in the cytoplasm. It catalyses the reaction L-homoserine + ATP = O-phospho-L-homoserine + ADP + H(+). It functions in the pathway amino-acid biosynthesis; L-threonine biosynthesis; L-threonine from L-aspartate: step 4/5. Catalyzes the ATP-dependent phosphorylation of L-homoserine to L-homoserine phosphate. The protein is Homoserine kinase of Streptococcus pneumoniae serotype 2 (strain D39 / NCTC 7466).